We begin with the raw amino-acid sequence, 180 residues long: Large ribosomal subunit protein uL5 (180 aa).

This sequence belongs to the universal ribosomal protein uL5 family. As to quaternary structure, part of the 50S ribosomal subunit; part of the 5S rRNA/L5/L18/L25 subcomplex. Contacts the 5S rRNA and the P site tRNA. Forms a bridge to the 30S subunit in the 70S ribosome.

This is one of the proteins that bind and probably mediate the attachment of the 5S RNA into the large ribosomal subunit, where it forms part of the central protuberance. In the 70S ribosome it contacts protein S13 of the 30S subunit (bridge B1b), connecting the 2 subunits; this bridge is implicated in subunit movement. Contacts the P site tRNA; the 5S rRNA and some of its associated proteins might help stabilize positioning of ribosome-bound tRNAs. This Lacticaseibacillus casei (strain BL23) (Lactobacillus casei) protein is Large ribosomal subunit protein uL5.